A 108-amino-acid chain; its full sequence is MISSGKPWNGWPVPKRKVCWSENRGDWSEVSLTCQAICGLRSRSGTGSGNSRNGLKESGGSRSGPGKPRGNRKSSRRIRPRPTSEKPRGYWRSSWRRPRSWIERRKRP.

Residues 39–68 (GLRSRSGTGSGNSRNGLKESGGSRSGPGKP) are compositionally biased toward low complexity. The segment at 39-95 (GLRSRSGTGSGNSRNGLKESGGSRSGPGKPRGNRKSSRRIRPRPTSEKPRGYWRSSW) is disordered. The segment covering 69–80 (RGNRKSSRRIRP) has biased composition (basic residues).

This is an uncharacterized protein from Acidithiobacillus ferridurans.